The sequence spans 194 residues: MLKEKLKKYKIILASGSPRRQQFFKDLDLDFEIRLKDVEEIYPPELKAVEITNFLAELKANAFEGELKENEILVTSDTIVWHQNKALGKPKNAEDAFQMIKSMSNTTHEVITSVCFKTNTAFTLLHDVTKVTFKDLSDESILYYIENYKPYDKAGAYGIQEWFGFMAVTKVEGSYTNVMGLPTAKVYEYLTTLV.

Asp77 (proton acceptor) is an active-site residue.

This sequence belongs to the Maf family. YhdE subfamily. Requires a divalent metal cation as cofactor.

Its subcellular location is the cytoplasm. It carries out the reaction dTTP + H2O = dTMP + diphosphate + H(+). The catalysed reaction is UTP + H2O = UMP + diphosphate + H(+). Its function is as follows. Nucleoside triphosphate pyrophosphatase that hydrolyzes dTTP and UTP. May have a dual role in cell division arrest and in preventing the incorporation of modified nucleotides into cellular nucleic acids. This Flavobacterium johnsoniae (strain ATCC 17061 / DSM 2064 / JCM 8514 / BCRC 14874 / CCUG 350202 / NBRC 14942 / NCIMB 11054 / UW101) (Cytophaga johnsonae) protein is dTTP/UTP pyrophosphatase.